The following is a 376-amino-acid chain: uncharacterized protein (376 aa).

The helical transmembrane segment at 19-39 threads the bilayer; the sequence is FVLISLILLLNLGLLLGIQIY.

This sequence to S.pombe SpAC5H10.12c.

The protein resides in the cytoplasm. It localises to the nucleus. It is found in the membrane. This is an uncharacterized protein from Schizosaccharomyces pombe (strain 972 / ATCC 24843) (Fission yeast).